Here is a 79-residue protein sequence, read N- to C-terminus: Hemoglobin subunit zeta (79 aa).

Ser1 carries the post-translational modification N-acetylserine. In terms of domain architecture, Globin spans 1 to 79; that stretch reads SLTKTXXTII…FKLLSHXFLV (79 aa). Ser38 and Ser53 each carry phosphoserine. His59 provides a ligand contact to heme b.

Belongs to the globin family. In terms of assembly, heterotetramer of two zeta chains and two epsilon chains.

Its function is as follows. The zeta chain is an alpha-type chain of mammalian embryonic hemoglobin. The protein is Hemoglobin subunit zeta of Notamacropus eugenii (Tammar wallaby).